We begin with the raw amino-acid sequence, 252 residues long: 2-succinyl-6-hydroxy-2,4-cyclohexadiene-1-carboxylate synthase (252 aa).

This sequence belongs to the AB hydrolase superfamily. MenH family. As to quaternary structure, monomer.

The catalysed reaction is 5-enolpyruvoyl-6-hydroxy-2-succinyl-cyclohex-3-ene-1-carboxylate = (1R,6R)-6-hydroxy-2-succinyl-cyclohexa-2,4-diene-1-carboxylate + pyruvate. Its pathway is quinol/quinone metabolism; 1,4-dihydroxy-2-naphthoate biosynthesis; 1,4-dihydroxy-2-naphthoate from chorismate: step 3/7. It functions in the pathway quinol/quinone metabolism; menaquinone biosynthesis. Catalyzes a proton abstraction reaction that results in 2,5-elimination of pyruvate from 2-succinyl-5-enolpyruvyl-6-hydroxy-3-cyclohexene-1-carboxylate (SEPHCHC) and the formation of 2-succinyl-6-hydroxy-2,4-cyclohexadiene-1-carboxylate (SHCHC). The polypeptide is 2-succinyl-6-hydroxy-2,4-cyclohexadiene-1-carboxylate synthase (Salmonella typhimurium (strain LT2 / SGSC1412 / ATCC 700720)).